We begin with the raw amino-acid sequence, 401 residues long: Argininosuccinate synthase (401 aa).

ATP is bound at residue 8 to 16 (AYSGGLDTS). Y87 is an L-citrulline binding site. Residue G117 participates in ATP binding. Positions 119, 123, and 124 each coordinate L-aspartate. N123 is an L-citrulline binding site. L-citrulline is bound by residues R127, S175, E259, and Y271.

This sequence belongs to the argininosuccinate synthase family. Type 1 subfamily. Homotetramer.

It localises to the cytoplasm. It catalyses the reaction L-citrulline + L-aspartate + ATP = 2-(N(omega)-L-arginino)succinate + AMP + diphosphate + H(+). The protein operates within amino-acid biosynthesis; L-arginine biosynthesis; L-arginine from L-ornithine and carbamoyl phosphate: step 2/3. This chain is Argininosuccinate synthase, found in Paenarthrobacter aurescens (strain TC1).